The primary structure comprises 400 residues: NADPH dehydrogenase 1 (400 aa).

FMN is bound by residues Thr38 and Gln115. 2 residues coordinate substrate: His192 and Asn195. Residue Tyr197 is the Proton donor of the active site. Arg244 and Arg349 together coordinate FMN. Tyr376 is a substrate binding site.

In terms of assembly, homodimer or heterodimer. It depends on FMN as a cofactor.

It carries out the reaction A + NADPH + H(+) = AH2 + NADP(+). Flavin-dependent enoate reductase that catalyzes the chemo- and stereoslective hydrogenation of electron-poor alkenes. The enzyme is reduced by NADPH, and oxygen, quinones, and alpha,beta-unsaturated aldehydes and ketones can act as electron acceptors to complete catalytic turnover. The physiological oxidant remains elusive. This Saccharomyces pastorianus (Lager yeast) protein is NADPH dehydrogenase 1.